Reading from the N-terminus, the 339-residue chain is Formyl peptide receptor-related sequence 6 (339 aa).

The Extracellular portion of the chain corresponds to 1-23 (MEANFSIPQNGSEVVFYDSTTSR). N-linked (GlcNAc...) asparagine glycosylation is found at asparagine 4 and asparagine 10. A helical membrane pass occupies residues 24–44 (VICIFLVVVLSITFLLGVIGN). At 45–62 (GLVIYVAGFRMTHTVTTI) the chain is on the cytoplasmic side. A helical membrane pass occupies residues 63–85 (CYLNLALSDFSYMASLPFQITSI). The Extracellular portion of the chain corresponds to 86–99 (VMNGEWLFGWFLCK). Cysteine 98 and cysteine 178 are oxidised to a cystine. The chain crosses the membrane as a helical span at residues 100 to 120 (FVHMIINVNLFLSIFLITFIA). At 121–144 (MDRCICVLHPVWAQNHRTVNVATK) the chain is on the cytoplasmic side. Residues 145–165 (VIFGAWILVLMLIFPHCIFVT) form a helical membrane-spanning segment. The Extracellular segment spans residues 166-198 (TVKDESGKVHCICNFESWAATPEEQVKVSMTVS). Residues 199–219 (LISVTISFIIGFSIPMIFIVI) traverse the membrane as a helical segment. Residues 220-241 (CYGLMAAKIGRRGFVNSSRPLR) are Cytoplasmic-facing. The chain crosses the membrane as a helical span at residues 242-262 (VLTAVAISFFVCWFPFQLIFL). Over 263 to 280 (LGNIGNKETQNNIDTWVN) the chain is Extracellular. The helical transmembrane segment at 281–301 (TASTLASFNSCLNPILYVFLG) threads the bilayer. The Cytoplasmic portion of the chain corresponds to 302-339 (QQFRERLIYSLSASLERALREDSALNSDKTRNLSSQRL).

Belongs to the G-protein coupled receptor 1 family. Expressed exclusively in vomeronasal tissue. Expressed in 1.2 % of a subset of sensory neurons located in the apical layer of the vomeronasal organ. Each neuron appears to express only one receptor gene. Expressed in brain, spleen, skeletal muscle and at high level in testis.

It is found in the membrane. In terms of biological role, may have an olfactory function associated with the identification of pathogens or of pathogenic states. The chain is Formyl peptide receptor-related sequence 6 (Fpr-rs6) from Mus musculus (Mouse).